Here is a 429-residue protein sequence, read N- to C-terminus: Queuine tRNA-ribosyltransferase accessory subunit 2 (429 aa).

4 residues coordinate Zn(2+): C330, C332, C335, and H361.

The protein belongs to the queuine tRNA-ribosyltransferase family. QTRT2 subfamily. In terms of assembly, heterodimer of a catalytic subunit and an accessory subunit. Requires Zn(2+) as cofactor.

It localises to the cytoplasm. Functionally, non-catalytic subunit of the queuine tRNA-ribosyltransferase (TGT) that catalyzes the base-exchange of a guanine (G) residue with queuine (Q) at position 34 (anticodon wobble position) in tRNAs with GU(N) anticodons (tRNA-Asp, -Asn, -His and -Tyr), resulting in the hypermodified nucleoside queuosine (7-(((4,5-cis-dihydroxy-2-cyclopenten-1-yl)amino)methyl)-7-deazaguanosine). This is Queuine tRNA-ribosyltransferase accessory subunit 2 from Culex quinquefasciatus (Southern house mosquito).